Consider the following 415-residue polypeptide: MPDSIPSLPDWLSRGMADLFPAGDPSDADQALAARLAQAEKEGRPLRVKLGIDPTGSNIHLGHSILFRKLRAFQDGGHTAVLIIGDFTARIGDPTGKSATRVQLSKEQVAANASTYLRQLGQDQPKETALLDFETPGRLEVRYNSEWLEGMDLPAVIGLLGTGTVGQMLAKDDFSKRYGSGTPIALHEFLYPLLQGYDSVAVNADVELGGTDQKFNVAMGRDLQRHFNKGTQFGLLLPILVGLDGVQKMSKSLGNVVGLEEDPLSMYSKLEKVGDAAIDDYVTLLTDLDLASLPDNPREKQKAMALAVTASRHGIEAAQKAQSDAATLVGGSGDAGADVPEASLAEVNFPAKAFYLFSAVGICASSSEARRQIKGGAARLEGEKITDPNQEFTSAAELEGKVLQLGKKTFRRLVA.

Residues 54–63 carry the 'HIGH' region motif; it reads PTGSNIHLGH. A 'KMSKS' region motif is present at residues 248–252; it reads KMSKS. Lysine 251 contacts ATP. Positions 351–414 constitute an S4 RNA-binding domain; the sequence is AKAFYLFSAV…LGKKTFRRLV (64 aa).

This sequence belongs to the class-I aminoacyl-tRNA synthetase family. TyrS type 2 subfamily. In terms of assembly, homodimer.

It localises to the cytoplasm. The catalysed reaction is tRNA(Tyr) + L-tyrosine + ATP = L-tyrosyl-tRNA(Tyr) + AMP + diphosphate + H(+). Its function is as follows. Catalyzes the attachment of tyrosine to tRNA(Tyr) in a two-step reaction: tyrosine is first activated by ATP to form Tyr-AMP and then transferred to the acceptor end of tRNA(Tyr). This is Tyrosine--tRNA ligase from Synechococcus sp. (strain CC9605).